We begin with the raw amino-acid sequence, 506 residues long: Lysine--tRNA ligase (506 aa).

The Mg(2+) site is built by Glu-415 and Glu-422.

Belongs to the class-II aminoacyl-tRNA synthetase family. As to quaternary structure, homodimer. Requires Mg(2+) as cofactor.

The protein resides in the cytoplasm. It carries out the reaction tRNA(Lys) + L-lysine + ATP = L-lysyl-tRNA(Lys) + AMP + diphosphate. The sequence is that of Lysine--tRNA ligase from Erwinia tasmaniensis (strain DSM 17950 / CFBP 7177 / CIP 109463 / NCPPB 4357 / Et1/99).